A 428-amino-acid polypeptide reads, in one-letter code: Metal tolerance protein 10 (428 aa).

Over 1–140 (MPLNSYIFFL…EMKKLAKSER (140 aa)) the chain is Cytoplasmic. The chain crosses the membrane as a helical span at residues 141–161 (LAVHISNATNLVLFVAKVYAS). The Vacuolar segment spans residues 162–167 (MESRSM). A helical membrane pass occupies residues 168 to 188 (AVIASTLDSLLDLLSGFILWF). At 189 to 209 (TANAMRKPNQFHYPIGKRRMQ) the chain is on the cytoplasmic side. The chain crosses the membrane as a helical span at residues 210–230 (PVGIIVFASVMATLGLQVLLE). At 231-248 (SGRQLVAKSGIHMNSTEE) the chain is on the vacuolar side. The chain crosses the membrane as a helical span at residues 249 to 269 (KWMIGIMVSVTIVKFLLMLYC). The Cytoplasmic segment spans residues 270–287 (RGFQNEIVRAYAQDHLFD). A helical membrane pass occupies residues 288–308 (VVTNSIGLATAVLAVKFYWWI). The Vacuolar portion of the chain corresponds to 309–311 (DPT). Residues 312 to 332 (GAILIALYTIATWARTVLENV) traverse the membrane as a helical segment. Residues 333–428 (HSLIGRSAPP…FTHRPEHKCN (96 aa)) are Cytoplasmic-facing.

The protein belongs to the cation diffusion facilitator (CDF) transporter (TC 2.A.4) family. SLC30A subfamily.

It is found in the vacuole membrane. Its function is as follows. Involved in sequestration of excess metal in the cytoplasm into vacuoles to maintain metal homeostasis. The polypeptide is Metal tolerance protein 10 (MTP10) (Arabidopsis thaliana (Mouse-ear cress)).